The primary structure comprises 5065 residues: Dynein heavy chain-like protein 1 (5065 aa).

The tract at residues 1-1957 is stem; the sequence is MELEKTHLIN…IIKMADATFE (1957 aa). A coiled-coil region spans residues 1677-1705; sequence QMEGFQKQLDRLSDSLSKIQKALGEYLEK. Positions 1958 to 2179 are AAA 1; sequence YGYEYLGMCE…LRSLKSVLNS (222 aa). 1996 to 2003 lines the ATP pocket; sequence GPAGTGKT. The tract at residues 2203 to 2223 is disordered; that stretch reads FNETLDNNNNNDNNNERKTTT. Residues 2204–2215 show a composition bias toward low complexity; the sequence is NETLDNNNNNDN. AAA stretches follow at residues 2281-2632, 2751-3004, and 3097-3367; these read NEIH…YEYI, DVDR…WKLA, and IFNE…GNRY. 2319–2326 is a binding site for ATP; it reads GDVGTGKS. Positions 2507–2529 are disordered; sequence EKNQNGNENGNENEKKNINIINN. Residues 2790–2797 and 3135–3142 contribute to the ATP site; these read GPPGSGKT and GASGAGKT. Positions 3386-3701 are stalk; that stretch reads IDEKKEEVSS…ETFINLEEAS (316 aa). 2 coiled-coil regions span residues 3388–3466 and 3970–3997; these read EKKE…LDEQ and TMEK…EVEN. AAA regions lie at residues 3754–3983 and 4289–4507; these read LSRP…EASK and FNKI…VVDS. Positions 4686-4705 are enriched in basic and acidic residues; it reads KDKNKDEDKNKNKENDDNNK. Residues 4686–4727 form a disordered region; it reads KDKNKDEDKNKNKENDDNNKKHIGNNKLVISSSERTESETSE.

This sequence belongs to the dynein heavy chain family. In terms of assembly, consists of at least two heavy chains and a number of intermediate and light chains.

Its subcellular location is the cytoplasm. It is found in the cytoskeleton. Acts as a motor for the intracellular retrograde motility of vesicles and organelles along microtubules. Dynein has ATPase activity; the force-producing power stroke is thought to occur on release of ADP. The protein is Dynein heavy chain-like protein 1 of Plasmodium falciparum (isolate 3D7).